The sequence spans 305 residues: Tyrosine recombinase XerC (305 aa).

Residues 1 to 93 (MVLDGFAAHF…SWRQYCVWLV (93 aa)) form the Core-binding (CB) domain. Residues 114-294 (RVPKALPQEW…DFDHIARLYD (181 aa)) enclose the Tyr recombinase domain. Residues Arg-155, Lys-179, His-246, Arg-249, and His-272 contribute to the active site. The active-site O-(3'-phospho-DNA)-tyrosine intermediate is the Tyr-281.

The protein belongs to the 'phage' integrase family. XerC subfamily. In terms of assembly, forms a cyclic heterotetrameric complex composed of two molecules of XerC and two molecules of XerD.

Its subcellular location is the cytoplasm. Functionally, site-specific tyrosine recombinase, which acts by catalyzing the cutting and rejoining of the recombining DNA molecules. The XerC-XerD complex is essential to convert dimers of the bacterial chromosome into monomers to permit their segregation at cell division. It also contributes to the segregational stability of plasmids. In Neisseria meningitidis serogroup C (strain 053442), this protein is Tyrosine recombinase XerC.